A 201-amino-acid chain; its full sequence is Recombination protein RecR (201 aa).

The C4-type zinc finger occupies 57–72 (CADCRTFTEQDVCNIC). A Toprim domain is found at 81-176 (GQICVVESPA…EASRIAHGVP (96 aa)).

The protein belongs to the RecR family.

May play a role in DNA repair. It seems to be involved in an RecBC-independent recombinational process of DNA repair. It may act with RecF and RecO. The chain is Recombination protein RecR from Citrobacter koseri (strain ATCC BAA-895 / CDC 4225-83 / SGSC4696).